Consider the following 211-residue polypeptide: Peroxiredoxin (211 aa).

In terms of domain architecture, Thioredoxin spans Pro2–Val156. Residue Cys44 is the Cysteine sulfenic acid (-SOH) intermediate of the active site. Residue Arg119 participates in substrate binding. A disulfide bond links Cys198 and Cys204.

The protein belongs to the peroxiredoxin family. Prx6 subfamily. As to quaternary structure, homodecamer. Pentamer of dimers that assemble into a ring structure.

It is found in the cytoplasm. The enzyme catalyses a hydroperoxide + [thioredoxin]-dithiol = an alcohol + [thioredoxin]-disulfide + H2O. In terms of biological role, thiol-specific peroxidase that catalyzes the reduction of hydrogen peroxide and organic hydroperoxides to water and alcohols, respectively. Plays a role in cell protection against oxidative stress by detoxifying peroxides. This chain is Peroxiredoxin, found in Methanothermobacter marburgensis (strain ATCC BAA-927 / DSM 2133 / JCM 14651 / NBRC 100331 / OCM 82 / Marburg) (Methanobacterium thermoautotrophicum).